The following is a 196-amino-acid chain: Protein TEX261 (196 aa).

5 helical membrane-spanning segments follow: residues 3-23 (FMYL…TLAV), 42-62 (SRII…LYVF), 70-90 (IGVG…FPFI), 97-117 (FILS…FFAE), and 125-145 (VLAY…VSLS).

The protein belongs to the SVP26 family.

It localises to the membrane. In Homo sapiens (Human), this protein is Protein TEX261 (TEX261).